The primary structure comprises 274 residues: Rhamnulose-1-phosphate aldolase (274 aa).

The active site involves E117. Positions 141, 143, and 212 each coordinate Zn(2+).

Belongs to the aldolase class II family. RhaD subfamily. In terms of assembly, homotetramer. It depends on Zn(2+) as a cofactor.

The protein localises to the cytoplasm. It carries out the reaction L-rhamnulose 1-phosphate = (S)-lactaldehyde + dihydroxyacetone phosphate. The protein operates within carbohydrate degradation; L-rhamnose degradation; glycerone phosphate from L-rhamnose: step 3/3. Its function is as follows. Catalyzes the reversible cleavage of L-rhamnulose-1-phosphate to dihydroxyacetone phosphate (DHAP) and L-lactaldehyde. The polypeptide is Rhamnulose-1-phosphate aldolase (Escherichia coli O45:K1 (strain S88 / ExPEC)).